A 1443-amino-acid polypeptide reads, in one-letter code: ARF guanine-nucleotide exchange factor GNL1 (1443 aa).

The SEC7 domain maps to 554–743 (FVRKVKHIKK…SEIYHSIRHS (190 aa)). Glu-658 is a catalytic residue. Disordered stretches follow at residues 917–949 (DDPE…AMPR) and 1424–1443 (DQFQ…GNEV). Residues 939 to 949 (VSQSQPSAMPR) show a composition bias toward polar residues. A compositionally biased stretch (basic and acidic residues) spans 1425–1435 (QFQRRNAKPED).

In terms of assembly, homodimer.

Its subcellular location is the cytoplasm. It localises to the cytosol. The protein localises to the golgi apparatus membrane. Functionally, activates the ARF proteins by exchanging bound GDP for free GTP. Plays a role in vesicular protein sorting. Acts as the major regulator of retrograde Golgi to endoplasmic reticulum trafficking but is also involved in the endocytosis process. Could function redundantly with GNOM. Regulates vesicle trafficking required for the coordinated polar localization of auxin efflux carriers which in turn determines the direction of auxin flow. Mediates the endocytosis of PIN2 from plasma membrane to endosomal compartments. Required for maintenance of endoplasmic reticulum morphology. This chain is ARF guanine-nucleotide exchange factor GNL1 (GNL1), found in Arabidopsis thaliana (Mouse-ear cress).